Consider the following 995-residue polypeptide: Polynucleotide 5'-hydroxyl-kinase NOL9 (995 aa).

Disordered stretches follow at residues 18 to 173 (EQRE…SSMK) and 271 to 359 (IKVF…YEPP). Low complexity-rich tracts occupy residues 75–94 (TAGA…SSPS) and 110–129 (VNKS…KSAK). Residues 279–354 (EETDSDEDDI…DIFDTDDLDS (76 aa)) show a composition bias toward acidic residues. ATP is bound at residue 639 to 646 (GGKGVGKS).

The protein belongs to the Clp1 family. NOL9/GRC3 subfamily.

It is found in the nucleus. It localises to the nucleolus. In terms of biological role, polynucleotide 5'-kinase involved in rRNA processing. In Drosophila melanogaster (Fruit fly), this protein is Polynucleotide 5'-hydroxyl-kinase NOL9.